The following is a 409-amino-acid chain: Tryptophan synthase beta chain (409 aa).

K100 is modified (N6-(pyridoxal phosphate)lysine).

Belongs to the TrpB family. In terms of assembly, tetramer of two alpha and two beta chains. It depends on pyridoxal 5'-phosphate as a cofactor.

The catalysed reaction is (1S,2R)-1-C-(indol-3-yl)glycerol 3-phosphate + L-serine = D-glyceraldehyde 3-phosphate + L-tryptophan + H2O. The protein operates within amino-acid biosynthesis; L-tryptophan biosynthesis; L-tryptophan from chorismate: step 5/5. In terms of biological role, the beta subunit is responsible for the synthesis of L-tryptophan from indole and L-serine. The protein is Tryptophan synthase beta chain of Pyrobaculum arsenaticum (strain DSM 13514 / JCM 11321 / PZ6).